We begin with the raw amino-acid sequence, 160 residues long: Transcription elongation factor GreA (160 aa).

A coiled-coil region spans residues 2–84 (KNTVNDKILL…SKAKIIKADL (83 aa)).

This sequence belongs to the GreA/GreB family.

Functionally, necessary for efficient RNA polymerase transcription elongation past template-encoded arresting sites. The arresting sites in DNA have the property of trapping a certain fraction of elongating RNA polymerases that pass through, resulting in locked ternary complexes. Cleavage of the nascent transcript by cleavage factors such as GreA or GreB allows the resumption of elongation from the new 3'terminus. GreA releases sequences of 2 to 3 nucleotides. The polypeptide is Transcription elongation factor GreA (Mesomycoplasma hyopneumoniae (strain 232) (Mycoplasma hyopneumoniae)).